A 1058-amino-acid chain; its full sequence is Carbamoyl phosphate synthase large chain (1058 aa).

The tract at residues 1 to 401 (MAKRTDIKKI…CLLKACRSLE (401 aa)) is carboxyphosphate synthetic domain. Positions 129, 169, 175, 176, 208, 210, 215, 241, 242, 243, 284, and 298 each coordinate ATP. Residues 133–327 (KQLMKELGEP…IAKIAAKIAV (195 aa)) form the ATP-grasp 1 domain. Mg(2+)-binding residues include glutamine 284, glutamate 298, and asparagine 300. Positions 284, 298, and 300 each coordinate Mn(2+). Positions 402 to 546 (IGVHHNELKG…YSTYEWENES (145 aa)) are oligomerization domain. Residues 547 to 929 (IKSEKESVIV…ALYKAFEASY (383 aa)) form a carbamoyl phosphate synthetic domain region. Residues 671-861 (EKALKELGIP…MAQVATKLIL (191 aa)) form the ATP-grasp 2 domain. Arginine 707, serine 746, isoleucine 748, glutamate 752, glycine 777, valine 778, histidine 779, serine 780, glutamine 820, and glutamate 832 together coordinate ATP. Mg(2+)-binding residues include glutamine 820, glutamate 832, and asparagine 834. Residues glutamine 820, glutamate 832, and asparagine 834 each coordinate Mn(2+). The region spanning 930–1058 (LHMPEYGTIV…ESRTFSIEAI (129 aa)) is the MGS-like domain. Residues 930–1058 (LHMPEYGTIV…ESRTFSIEAI (129 aa)) form an allosteric domain region.

It belongs to the CarB family. In terms of assembly, composed of two chains; the small (or glutamine) chain promotes the hydrolysis of glutamine to ammonia, which is used by the large (or ammonia) chain to synthesize carbamoyl phosphate. Tetramer of heterodimers (alpha,beta)4. Mg(2+) is required as a cofactor. It depends on Mn(2+) as a cofactor.

The enzyme catalyses hydrogencarbonate + L-glutamine + 2 ATP + H2O = carbamoyl phosphate + L-glutamate + 2 ADP + phosphate + 2 H(+). The catalysed reaction is hydrogencarbonate + NH4(+) + 2 ATP = carbamoyl phosphate + 2 ADP + phosphate + 2 H(+). Its pathway is amino-acid biosynthesis; L-arginine biosynthesis; carbamoyl phosphate from bicarbonate: step 1/1. The protein operates within pyrimidine metabolism; UMP biosynthesis via de novo pathway; (S)-dihydroorotate from bicarbonate: step 1/3. Its function is as follows. Large subunit of the glutamine-dependent carbamoyl phosphate synthetase (CPSase). CPSase catalyzes the formation of carbamoyl phosphate from the ammonia moiety of glutamine, carbonate, and phosphate donated by ATP, constituting the first step of 2 biosynthetic pathways, one leading to arginine and/or urea and the other to pyrimidine nucleotides. The large subunit (synthetase) binds the substrates ammonia (free or transferred from glutamine from the small subunit), hydrogencarbonate and ATP and carries out an ATP-coupled ligase reaction, activating hydrogencarbonate by forming carboxy phosphate which reacts with ammonia to form carbamoyl phosphate. This chain is Carbamoyl phosphate synthase large chain, found in Streptococcus equi subsp. equi (strain 4047).